The sequence spans 176 residues: Putative ribosomal protein eS10-like (176 aa).

Residues 104 to 176 form a disordered region; that stretch reads TLHRSRPETG…CGRGRGQPPQ (73 aa). The segment covering 108–139 has biased composition (basic and acidic residues); sequence SRPETGRPRPKGLEGKRPARLTRREADRDTYR.

Belongs to the eukaryotic ribosomal protein eS10 family.

This Homo sapiens (Human) protein is Putative ribosomal protein eS10-like (RPS10P5).